Here is a 448-residue protein sequence, read N- to C-terminus: Phosphoglucosamine mutase (448 aa).

The Phosphoserine intermediate role is filled by S100. Mg(2+) is bound by residues S100, D240, D242, and D244. S100 is modified (phosphoserine).

The protein belongs to the phosphohexose mutase family. Mg(2+) is required as a cofactor. Post-translationally, activated by phosphorylation.

It carries out the reaction alpha-D-glucosamine 1-phosphate = D-glucosamine 6-phosphate. Catalyzes the conversion of glucosamine-6-phosphate to glucosamine-1-phosphate. In Bacillus pumilus (strain SAFR-032), this protein is Phosphoglucosamine mutase.